The chain runs to 545 residues: ATP synthase subunit alpha (545 aa).

Residue 172-179 coordinates ATP; sequence GDRKTGKT.

The protein belongs to the ATPase alpha/beta chains family. F-type ATPases have 2 components, CF(1) - the catalytic core - and CF(0) - the membrane proton channel. CF(1) has five subunits: alpha(3), beta(3), gamma(1), delta(1), epsilon(1). CF(0) has three main subunits: a(1), b(2) and c(9-12). The alpha and beta chains form an alternating ring which encloses part of the gamma chain. CF(1) is attached to CF(0) by a central stalk formed by the gamma and epsilon chains, while a peripheral stalk is formed by the delta and b chains.

Its subcellular location is the cell membrane. The catalysed reaction is ATP + H2O + 4 H(+)(in) = ADP + phosphate + 5 H(+)(out). Functionally, produces ATP from ADP in the presence of a proton gradient across the membrane. The alpha chain is a regulatory subunit. The chain is ATP synthase subunit alpha from Corynebacterium urealyticum (strain ATCC 43042 / DSM 7109).